Here is a 61-residue protein sequence, read N- to C-terminus: Small ribosomal subunit protein uS14 (61 aa).

The Zn(2+) site is built by C24, C27, C40, and C43.

It belongs to the universal ribosomal protein uS14 family. Zinc-binding uS14 subfamily. Part of the 30S ribosomal subunit. Contacts proteins S3 and S10. Zn(2+) is required as a cofactor.

Binds 16S rRNA, required for the assembly of 30S particles and may also be responsible for determining the conformation of the 16S rRNA at the A site. In Petrotoga mobilis (strain DSM 10674 / SJ95), this protein is Small ribosomal subunit protein uS14.